Reading from the N-terminus, the 78-residue chain is D-alanyl carrier protein (78 aa).

The Carrier domain maps to 1-77; it reads MDLKEQIVEI…KVVAKVESLI (77 aa). O-(pantetheine 4'-phosphoryl)serine is present on serine 35.

The protein belongs to the DltC family. Post-translationally, 4'-phosphopantetheine is transferred from CoA to a specific serine of apo-DCP.

The protein resides in the cytoplasm. Its pathway is cell wall biogenesis; lipoteichoic acid biosynthesis. Its function is as follows. Carrier protein involved in the D-alanylation of lipoteichoic acid (LTA). The loading of thioester-linked D-alanine onto DltC is catalyzed by D-alanine--D-alanyl carrier protein ligase DltA. The DltC-carried D-alanyl group is further transferred to cell membrane phosphatidylglycerol (PG) by forming an ester bond, probably catalyzed by DltD. D-alanylation of LTA plays an important role in modulating the properties of the cell wall in Gram-positive bacteria, influencing the net charge of the cell wall. In Leuconostoc mesenteroides subsp. mesenteroides (strain ATCC 8293 / DSM 20343 / BCRC 11652 / CCM 1803 / JCM 6124 / NCDO 523 / NBRC 100496 / NCIMB 8023 / NCTC 12954 / NRRL B-1118 / 37Y), this protein is D-alanyl carrier protein.